A 363-amino-acid polypeptide reads, in one-letter code: Cytoplasmic tRNA 2-thiolation protein 1 (363 aa).

Residues 337–363 (DGDCEQQATRSERNRSSLQGKHGNFDF) form a disordered region.

It belongs to the TtcA family. CTU1/NCS6/ATPBD3 subfamily.

The protein localises to the cytoplasm. Its pathway is tRNA modification; 5-methoxycarbonylmethyl-2-thiouridine-tRNA biosynthesis. Its function is as follows. Plays a central role in 2-thiolation of mcm(5)S(2)U at tRNA wobble positions of tRNA(Lys), tRNA(Glu) and tRNA(Gln). Directly binds tRNAs and probably acts by catalyzing adenylation of tRNAs, an intermediate required for 2-thiolation. It is unclear whether it acts as a sulfurtransferase that transfers sulfur from thiocarboxylated URM1 onto the uridine of tRNAs at wobble position. This is Cytoplasmic tRNA 2-thiolation protein 1 from Oryza sativa subsp. japonica (Rice).